Here is a 181-residue protein sequence, read N- to C-terminus: Probable cobalt-precorrin-6B C(15)-methyltransferase (decarboxylating) (181 aa).

S-adenosyl-L-methionine contacts are provided by residues Thr-16, 40-44, Asp-61, and Ala-89; that span reads GCGSG.

The protein belongs to the methyltransferase superfamily. Archaeal-type CbiT family.

The catalysed reaction is Co-precorrin-6B + S-adenosyl-L-methionine = Co-precorrin-7 + S-adenosyl-L-homocysteine + CO2. Its pathway is cofactor biosynthesis; adenosylcobalamin biosynthesis; cob(II)yrinate a,c-diamide from sirohydrochlorin (anaerobic route): step 8/10. In terms of biological role, catalyzes the methylation of C-15 in cobalt-precorrin-6B followed by the decarboxylation of C-12 to form cobalt-precorrin-7. The protein is Probable cobalt-precorrin-6B C(15)-methyltransferase (decarboxylating) of Methanococcus maripaludis (strain C5 / ATCC BAA-1333).